The sequence spans 156 residues: 6,7-dimethyl-8-ribityllumazine synthase (156 aa).

Residues phenylalanine 22, 57 to 59, and 81 to 83 each bind 5-amino-6-(D-ribitylamino)uracil; these read AYE and TVI. 86-87 is a binding site for (2S)-2-hydroxy-3-oxobutyl phosphate; it reads GT. Catalysis depends on histidine 89, which acts as the Proton donor. Phenylalanine 114 lines the 5-amino-6-(D-ribitylamino)uracil pocket. Arginine 128 contacts (2S)-2-hydroxy-3-oxobutyl phosphate.

The protein belongs to the DMRL synthase family. In terms of assembly, forms an icosahedral capsid composed of 60 subunits, arranged as a dodecamer of pentamers.

It carries out the reaction (2S)-2-hydroxy-3-oxobutyl phosphate + 5-amino-6-(D-ribitylamino)uracil = 6,7-dimethyl-8-(1-D-ribityl)lumazine + phosphate + 2 H2O + H(+). Its pathway is cofactor biosynthesis; riboflavin biosynthesis; riboflavin from 2-hydroxy-3-oxobutyl phosphate and 5-amino-6-(D-ribitylamino)uracil: step 1/2. Its function is as follows. Catalyzes the formation of 6,7-dimethyl-8-ribityllumazine by condensation of 5-amino-6-(D-ribitylamino)uracil with 3,4-dihydroxy-2-butanone 4-phosphate. This is the penultimate step in the biosynthesis of riboflavin. This is 6,7-dimethyl-8-ribityllumazine synthase from Edwardsiella ictaluri (strain 93-146).